The following is a 37-amino-acid chain: Large ribosomal subunit protein bL36c (37 aa).

Belongs to the bacterial ribosomal protein bL36 family.

Its subcellular location is the plastid. It localises to the chloroplast. The chain is Large ribosomal subunit protein bL36c (rpl36) from Chlamydomonas reinhardtii (Chlamydomonas smithii).